The primary structure comprises 937 residues: Chaperone protein ClpD2, chloroplastic (937 aa).

The N-terminal 80 residues, 1–80 (MEACCCSSSS…FERFTERAVK (80 aa)), are a transit peptide targeting the chloroplast. Repeat stretches follow at residues 81–137 (AVVF…VGKE) and 152–217 (FSGA…VQGE). A Clp R domain is found at 81-217 (AVVFSQREAR…KQALTRVQGE (137 aa)). Residues 259–513 (LALFCLDLTM…RMESFKRKKE (255 aa)) are i. Residues 304–311 (GEAGVGKT) and 658–665 (GPTGVGKT) each bind ATP. The II stretch occupies residues 584 to 775 (VGSEEIARVT…LIVMTSNVGS (192 aa)).

The protein belongs to the ClpA/ClpB family. ClpD subfamily. As to expression, highly expressed in stems, culms and leaves.

It localises to the plastid. It is found in the chloroplast. Functionally, molecular chaperone that may interact with a ClpP-like protease involved in degradation of denatured proteins in the chloroplast. The protein is Chaperone protein ClpD2, chloroplastic (CLPD2) of Oryza sativa subsp. japonica (Rice).